The sequence spans 784 residues: DNA ligase (784 aa).

Residues 31-35 (DAEYD), 80-81 (SL), and Glu120 contribute to the NAD(+) site. Catalysis depends on Lys122, which acts as the N6-AMP-lysine intermediate. The NAD(+) site is built by Arg143, Glu180, Lys296, and Lys320. Residues Cys414, Cys417, Cys444, and Cys450 each contribute to the Zn(2+) site. Residues 701–784 (AEGLPLAGQT…AFMAEQGITL (84 aa)) form the BRCT domain.

Belongs to the NAD-dependent DNA ligase family. LigA subfamily. Requires Mg(2+) as cofactor. Mn(2+) serves as cofactor.

The enzyme catalyses NAD(+) + (deoxyribonucleotide)n-3'-hydroxyl + 5'-phospho-(deoxyribonucleotide)m = (deoxyribonucleotide)n+m + AMP + beta-nicotinamide D-nucleotide.. DNA ligase that catalyzes the formation of phosphodiester linkages between 5'-phosphoryl and 3'-hydroxyl groups in double-stranded DNA using NAD as a coenzyme and as the energy source for the reaction. It is essential for DNA replication and repair of damaged DNA. The sequence is that of DNA ligase from Pseudomonas entomophila (strain L48).